The sequence spans 213 residues: Uridine kinase (213 aa).

15–22 (GASASGKS) contributes to the ATP binding site.

The protein belongs to the uridine kinase family.

Its subcellular location is the cytoplasm. The catalysed reaction is uridine + ATP = UMP + ADP + H(+). It catalyses the reaction cytidine + ATP = CMP + ADP + H(+). The protein operates within pyrimidine metabolism; CTP biosynthesis via salvage pathway; CTP from cytidine: step 1/3. Its pathway is pyrimidine metabolism; UMP biosynthesis via salvage pathway; UMP from uridine: step 1/1. In Escherichia fergusonii (strain ATCC 35469 / DSM 13698 / CCUG 18766 / IAM 14443 / JCM 21226 / LMG 7866 / NBRC 102419 / NCTC 12128 / CDC 0568-73), this protein is Uridine kinase.